A 317-amino-acid polypeptide reads, in one-letter code: Aspartate carbamoyltransferase catalytic subunit (317 aa).

Positions 65 and 66 each coordinate carbamoyl phosphate. L-aspartate is bound at residue Lys-93. Carbamoyl phosphate contacts are provided by Arg-115, His-145, and Gln-148. Positions 178 and 233 each coordinate L-aspartate. 2 residues coordinate carbamoyl phosphate: Gly-274 and Pro-275.

This sequence belongs to the aspartate/ornithine carbamoyltransferase superfamily. ATCase family. Heterododecamer (2C3:3R2) of six catalytic PyrB chains organized as two trimers (C3), and six regulatory PyrI chains organized as three dimers (R2).

The enzyme catalyses carbamoyl phosphate + L-aspartate = N-carbamoyl-L-aspartate + phosphate + H(+). The protein operates within pyrimidine metabolism; UMP biosynthesis via de novo pathway; (S)-dihydroorotate from bicarbonate: step 2/3. Catalyzes the condensation of carbamoyl phosphate and aspartate to form carbamoyl aspartate and inorganic phosphate, the committed step in the de novo pyrimidine nucleotide biosynthesis pathway. The sequence is that of Aspartate carbamoyltransferase catalytic subunit from Bordetella bronchiseptica (strain ATCC BAA-588 / NCTC 13252 / RB50) (Alcaligenes bronchisepticus).